A 185-amino-acid chain; its full sequence is Ribosome-recycling factor (185 aa).

The protein belongs to the RRF family.

The protein localises to the cytoplasm. In terms of biological role, responsible for the release of ribosomes from messenger RNA at the termination of protein biosynthesis. May increase the efficiency of translation by recycling ribosomes from one round of translation to another. The chain is Ribosome-recycling factor from Coxiella burnetii (strain CbuK_Q154) (Coxiella burnetii (strain Q154)).